The primary structure comprises 173 residues: MGRYRGPRLRIIRRLGDLPLFTKKKPHIASKRLPLGHPVRKIKRRPSIYGLRLLAKQRCCYSYGLRDYQLKNYIKKARNAQGDPIKNLIFLLESRLDSKIYRSGIVSTMAAARQLITHGHVLVDNIKITIPSYSCNESQILDYKNTKLTSELIEKIKLSFNPIYVLEYYAIKL.

One can recognise an S4 RNA-binding domain in the interval 94 to 155; it reads SRLDSKIYRS…TKLTSELIEK (62 aa).

The protein belongs to the universal ribosomal protein uS4 family. As to quaternary structure, part of the 30S ribosomal subunit. Contacts protein S5. The interaction surface between S4 and S5 is involved in control of translational fidelity.

Its subcellular location is the plastid. One of the primary rRNA binding proteins, it binds directly to 16S rRNA where it nucleates assembly of the body of the 30S subunit. Functionally, with S5 and S12 plays an important role in translational accuracy. The chain is Small ribosomal subunit protein uS4c (rps4) from Helicosporidium sp. subsp. Simulium jonesii (Green alga).